Consider the following 556-residue polypeptide: 2-succinyl-5-enolpyruvyl-6-hydroxy-3-cyclohexene-1-carboxylate synthase (556 aa).

The protein belongs to the TPP enzyme family. MenD subfamily. In terms of assembly, homodimer. It depends on Mg(2+) as a cofactor. Requires Mn(2+) as cofactor. The cofactor is thiamine diphosphate.

It carries out the reaction isochorismate + 2-oxoglutarate + H(+) = 5-enolpyruvoyl-6-hydroxy-2-succinyl-cyclohex-3-ene-1-carboxylate + CO2. The protein operates within quinol/quinone metabolism; 1,4-dihydroxy-2-naphthoate biosynthesis; 1,4-dihydroxy-2-naphthoate from chorismate: step 2/7. Its pathway is quinol/quinone metabolism; menaquinone biosynthesis. Functionally, catalyzes the thiamine diphosphate-dependent decarboxylation of 2-oxoglutarate and the subsequent addition of the resulting succinic semialdehyde-thiamine pyrophosphate anion to isochorismate to yield 2-succinyl-5-enolpyruvyl-6-hydroxy-3-cyclohexene-1-carboxylate (SEPHCHC). This chain is 2-succinyl-5-enolpyruvyl-6-hydroxy-3-cyclohexene-1-carboxylate synthase, found in Escherichia coli (strain UTI89 / UPEC).